A 287-amino-acid chain; its full sequence is Nucleoside kinase (287 aa).

Substrate-binding residues include Asp13, Asn28, Gly38, and Asn42. Gln102 is an ATP binding site. Substrate is bound by residues Ser104 and Gln150. Residues Asn173 and 196–201 contribute to the ATP site; that span reads TNGERG. Asp227 serves as a coordination point for substrate. Asp227 acts as the Proton acceptor in catalysis.

Belongs to the carbohydrate kinase PfkB family. As to quaternary structure, homodimer. Requires Mg(2+) as cofactor. The cofactor is Co(2+).

It carries out the reaction adenosine + ATP = AMP + ADP + H(+). The catalysed reaction is cytidine + ATP = CMP + ADP + H(+). It catalyses the reaction guanosine + ATP = GMP + ADP + H(+). The enzyme catalyses inosine + ATP = IMP + ADP + H(+). Nucleoside kinase with broad substrate specificity. Catalyzes the phosphorylation of a variety of nucleosides to the corresponding nucleoside 5'-mono-phosphate in the presence of phosphate donors and divalent cations. Displays the most efficient activity with guanosine, followed by inosine, cytidine, and adenosine. Negligible enzymatic activity is detected with thymidine, uridine, and 2-deoxyadenosine. ATP is the most efficient phosphate donor, but can also use GTP and ITP. Shows no sugar kinase activity, since it is unable to phosphorylate ribose, fructose-1-phosphate, or fructose-6-phosphate. The sequence is that of Nucleoside kinase from Thermoplasma acidophilum (strain ATCC 25905 / DSM 1728 / JCM 9062 / NBRC 15155 / AMRC-C165).